The sequence spans 397 residues: Staphyloferrin A transporter (397 aa).

Transmembrane regions (helical) follow at residues 10 to 30 (FLLFLGNWIGQIGLNWFVLTT), 39 to 59 (IVNFCRLVPILLLSVWAGAIA), 67 to 87 (LLRITISSSFLVTAILCVLTY), 93 to 110 (PISVIIIYATLRGILSAV), 137 to 157 (FIINICRSIGPAIAGVILAVY), 162 to 182 (TFLAQAICYFIAVLLCLPLHF), 213 to 233 (IFITSLLIMATGFSYTTLLPV), 245 to 265 (IFGIAMTMCAIGGIIATLVLP), 271 to 292 (IGMVNMYYLSSFLFGIALLGVV), 296 to 313 (IVIMFICITLIGLFSQWA), 333 to 353 (VLSIIMMDRGMIPLGSLLMSI), and 358 to 378 (FGIVRTFSIMGISTICITMVF).

This sequence belongs to the major facilitator superfamily.

The protein localises to the cell membrane. In terms of biological role, involved in staphyloferrin A secretion. The protein is Staphyloferrin A transporter of Staphylococcus aureus (strain NCTC 8325 / PS 47).